The chain runs to 230 residues: Heptaprenylglyceryl phosphate synthase (230 aa).

Residue Lys12 participates in sn-glycerol 1-phosphate binding. Positions 14 and 40 each coordinate Mg(2+). Residues 159 to 164 (YIEYSG), Gly189, and 209 to 210 (GD) each bind sn-glycerol 1-phosphate.

It belongs to the GGGP/HepGP synthase family. Group I subfamily. As to quaternary structure, homodimer. Mg(2+) serves as cofactor.

It catalyses the reaction sn-glycerol 1-phosphate + all-trans-heptaprenyl diphosphate = 3-heptaprenyl-sn-glycero-1-phosphate + diphosphate. Its pathway is membrane lipid metabolism; glycerophospholipid metabolism. Its function is as follows. Prenyltransferase that catalyzes in vivo the transfer of the heptaprenyl moiety of heptaprenyl pyrophosphate (HepPP; 35 carbon atoms) to the C3 hydroxyl of sn-glycerol-1-phosphate (G1P), producing heptaprenylglyceryl phosphate (HepGP). This reaction is an ether-bond-formation step in the biosynthesis of archaea-type G1P-based membrane lipids found in Bacillales. This Staphylococcus aureus (strain USA300) protein is Heptaprenylglyceryl phosphate synthase.